A 467-amino-acid chain; its full sequence is 26S proteasome regulatory subunit 7 homolog (467 aa).

Disordered regions lie at residues 1 to 26 (MPPK…DDKI) and 108 to 140 (GNGE…DEDD). The span at 117 to 134 (TDNNNSGNSNSNSNQQST) shows a compositional bias: low complexity. Residues Ser-164 and Ser-231 each carry the phosphoserine modification. 250–257 (GPPGTGKT) serves as a coordination point for ATP.

The protein belongs to the AAA ATPase family. Interacts with UBR1 and CIC1. Post-translationally, the N-terminus is blocked.

It localises to the cytoplasm. Its subcellular location is the nucleus. In terms of biological role, the 26S proteasome is involved in the ATP-dependent degradation of ubiquitinated proteins. The regulatory (or ATPase) complex confers ATP dependency and substrate specificity to the 26S complex. The polypeptide is 26S proteasome regulatory subunit 7 homolog (RPT1) (Saccharomyces cerevisiae (strain ATCC 204508 / S288c) (Baker's yeast)).